A 377-amino-acid chain; its full sequence is Nitric oxide reductase FlRd-NAD(+) reductase (377 aa).

It belongs to the FAD-dependent oxidoreductase family. FAD is required as a cofactor.

The protein resides in the cytoplasm. The catalysed reaction is 2 reduced [nitric oxide reductase rubredoxin domain] + NAD(+) + H(+) = 2 oxidized [nitric oxide reductase rubredoxin domain] + NADH. It participates in nitrogen metabolism; nitric oxide reduction. One of at least two accessory proteins for anaerobic nitric oxide (NO) reductase. Reduces the rubredoxin moiety of NO reductase. This is Nitric oxide reductase FlRd-NAD(+) reductase from Escherichia coli O45:K1 (strain S88 / ExPEC).